The primary structure comprises 536 residues: MFS-type efflux pump MFS1 (536 aa).

Helical transmembrane passes span 30–50, 80–100, and 102–122; these read VTGLKLAVIVTGLCLSVLLVA, YLLTICAFQLIFGKIYTFFPV, and WVFLIAITIFEIGSAICGAAP. Asparagine 123 carries an N-linked (GlcNAc...) asparagine glycan. The next 3 membrane-spanning stretches (helical) occupy residues 133-153, 163-183, and 191-211; these read VAGIGSAGIFSGALIIIAYSI, GAIGGMYGIASVAGPLMGGAF, and WCFYINLPIGAVTILSILIFL. A glycan (N-linked (GlcNAc...) asparagine) is linked at asparagine 221. A run of 8 helical transmembrane segments spans residues 234–254, 264–284, 306–326, 342–362, 366–386, 400–420, 426–446, and 503–523; these read IGTAFFMPSIICLLLALQWGG, IIALFVVFAVLISGFIYFQIR, FFLFTIGSAFFIMVYYLPIWF, IPMVLSLVVLSIASGITVTAI, APLYYVSTVLTSIGAGLLTTF, IIFGAGVGTGLQLSIIAAQAV, VAVGTVIMMFCQTLGGALFVS, and TWYVATALAALSVIGSVGMEW.

The protein belongs to the major facilitator superfamily. TCR/Tet family.

It is found in the cell membrane. MFS-type efflux pump involved in the modulation susceptibility to azoles, including fluconazole, itraconazole, miconazole and voriconazole. Also confers increased resistance chloramphenicol and thiamphenicol, suggesting that it acts as a pleiotropic drug transporter with a broad substrate spectrum. Finally, increases the tolerance to cycloheximide when expressed in S.cerevisiae, but not in dermatophyte species. The protein is MFS-type efflux pump MFS1 of Arthroderma benhamiae (strain ATCC MYA-4681 / CBS 112371) (Trichophyton mentagrophytes).